The primary structure comprises 536 residues: ADP,ATP carrier protein 4 (536 aa).

A run of 9 helical transmembrane segments spans residues 44–64, 77–97, 109–129, 172–194, 205–225, 244–264, 309–329, 349–369, and 378–398; these read VLLF…LYVL, SILF…IVIV, MLEV…FVIW, TMLY…FSRA, KFLP…GLLT, FSQV…TSFF, VVAA…GIVL, AQII…THLI, and AITA…MVFF. N-linked (GlcNAc...) asparagine glycosylation is found at asparagine 400 and asparagine 421. Helical transmembrane passes span 465-485 and 493-513; these read LGIN…TVVF and VVSV…RSIL.

It belongs to the ADP/ATP translocase tlc family.

Its subcellular location is the cell membrane. Functionally, ATP transporter involved in the uptake of ATP from the host cell cytoplasm. Provides the microsporidian cell with host ATP in exchange for ADP. This is an obligate exchange system. This energy acquiring activity is an important component of microsporidian parasitism. The sequence is that of ADP,ATP carrier protein 4 (NTT4) from Encephalitozoon cuniculi (strain GB-M1) (Microsporidian parasite).